We begin with the raw amino-acid sequence, 207 residues long: Guanylate kinase (207 aa).

Residues 4–184 (GILFIISAPS…AINDLRTIII (181 aa)) enclose the Guanylate kinase-like domain. Position 11–18 (11–18 (APSGTGKS)) interacts with ATP.

The protein belongs to the guanylate kinase family.

The protein resides in the cytoplasm. The enzyme catalyses GMP + ATP = GDP + ADP. In terms of biological role, essential for recycling GMP and indirectly, cGMP. The chain is Guanylate kinase from Buchnera aphidicola subsp. Schizaphis graminum (strain Sg).